We begin with the raw amino-acid sequence, 356 residues long: GTPase Obg (356 aa).

An Obg domain is found at 1–158 (MFIDSVKITL…RLVRLELKLI (158 aa)). The region spanning 159 to 339 (ADVGLVGFPN…LKFMLLEEIK (181 aa)) is the OBG-type G domain. GTP is bound by residues 165–172 (GFPNVGKS), 190–194 (FTTLT), 212–215 (DIPG), 280–283 (SKSD), and 320–322 (SSL). Mg(2+) is bound by residues Ser172 and Thr192.

This sequence belongs to the TRAFAC class OBG-HflX-like GTPase superfamily. OBG GTPase family. In terms of assembly, monomer. Mg(2+) serves as cofactor.

It localises to the cytoplasm. In terms of biological role, an essential GTPase which binds GTP, GDP and possibly (p)ppGpp with moderate affinity, with high nucleotide exchange rates and a fairly low GTP hydrolysis rate. Plays a role in control of the cell cycle, stress response, ribosome biogenesis and in those bacteria that undergo differentiation, in morphogenesis control. The sequence is that of GTPase Obg from Campylobacter jejuni subsp. jejuni serotype O:23/36 (strain 81-176).